The sequence spans 299 residues: tRNA-cytidine(32) 2-sulfurtransferase (299 aa).

Residues 49–54 (SGGKDS) carry the PP-loop motif motif. Positions 124, 127, and 215 each coordinate [4Fe-4S] cluster.

It belongs to the TtcA family. As to quaternary structure, homodimer. Mg(2+) serves as cofactor. Requires [4Fe-4S] cluster as cofactor.

The protein resides in the cytoplasm. The catalysed reaction is cytidine(32) in tRNA + S-sulfanyl-L-cysteinyl-[cysteine desulfurase] + AH2 + ATP = 2-thiocytidine(32) in tRNA + L-cysteinyl-[cysteine desulfurase] + A + AMP + diphosphate + H(+). Its pathway is tRNA modification. Its function is as follows. Catalyzes the ATP-dependent 2-thiolation of cytidine in position 32 of tRNA, to form 2-thiocytidine (s(2)C32). The sulfur atoms are provided by the cysteine/cysteine desulfurase (IscS) system. In Deinococcus radiodurans (strain ATCC 13939 / DSM 20539 / JCM 16871 / CCUG 27074 / LMG 4051 / NBRC 15346 / NCIMB 9279 / VKM B-1422 / R1), this protein is tRNA-cytidine(32) 2-sulfurtransferase.